Reading from the N-terminus, the 81-residue chain is Protein Vpu (81 aa).

Residues 1–7 (MSILQIV) lie on the Extracellular side of the membrane. Residues 8-28 (AIVAIIVALILAIVVWTIVYI) form a helical membrane-spanning segment. Topologically, residues 29 to 81 (EYKRLLRQRKIDWLIDRIRERAEDSGNESEGDTEELSTLVEMEPDNFRNDNDM) are cytoplasmic. The tract at residues 50 to 81 (AEDSGNESEGDTEELSTLVEMEPDNFRNDNDM) is disordered. Phosphoserine; by host CK2 is present on residues Ser-53 and Ser-57. A compositionally biased stretch (acidic residues) spans 53–63 (SGNESEGDTEE).

This sequence belongs to the HIV-1 VPU protein family. As to quaternary structure, homopentamer. Interacts with host CD4 and BRTC; these interactions induce proteasomal degradation of CD4. Interacts with host BST2; this interaction leads to the degradation of host BST2. Interacts with host FBXW11. Interacts with host AP1M1; this interaction plays a role in the mistrafficking and subsequent degradation of host BST2. Interacts with host RANBP2; this interaction allows Vpu to down-regulate host BLM sumoylation. Post-translationally, phosphorylated by host CK2. This phosphorylation is necessary for interaction with human BTRC and degradation of CD4.

It localises to the host membrane. Ion channel activity is inhibited by hexamethylene amiloride in vitro. Functionally, enhances virion budding by targeting host CD4 and Tetherin/BST2 to proteasome degradation. Degradation of CD4 prevents any unwanted premature interactions between viral Env and its host receptor CD4 in the endoplasmic reticulum. Degradation of antiretroviral protein Tetherin/BST2 is important for virion budding, as BST2 tethers new viral particles to the host cell membrane. Mechanistically, Vpu bridges either CD4 or BST2 to BTRC, a substrate recognition subunit of the Skp1/Cullin/F-box protein E3 ubiquitin ligase, induces their ubiquitination and subsequent proteasomal degradation. The alteration of the E3 ligase specificity by Vpu seems to promote the degradation of host IKBKB, leading to NF-kappa-B down-regulation and subsequent apoptosis. Acts as a viroporin that forms an oligomeric ion channel in membranes. Modulates the host DNA repair mechanisms to promote degradation of nuclear viral cDNA in cells that are already productively infected in order to suppress immune sensing and proviral hyper-integration (superinfection). Manipulates PML-NBs and modulates SUMOylation of host BLM protein thereby enhancing its DNA-end processing activity toward viral unintegrated linear DNA. Also inhibits RAD52-mediated homologous repair of viral cDNA, preventing the generation of dead-end circular forms of single copies of the long terminal repeat and permitting sustained nucleolytic attack. This is Protein Vpu from Human immunodeficiency virus type 1 (HIV-1).